A 339-amino-acid chain; its full sequence is UDP-N-acetylglucosamine--N-acetylmuramyl-(pentapeptide) pyrophosphoryl-undecaprenol N-acetylglucosamine transferase (339 aa).

Residues 10 to 12 (TGG), Asn124, Arg168, Ser188, Ile235, and Gln280 each bind UDP-N-acetyl-alpha-D-glucosamine.

This sequence belongs to the glycosyltransferase 28 family. MurG subfamily.

Its subcellular location is the cell inner membrane. The enzyme catalyses di-trans,octa-cis-undecaprenyl diphospho-N-acetyl-alpha-D-muramoyl-L-alanyl-D-glutamyl-meso-2,6-diaminopimeloyl-D-alanyl-D-alanine + UDP-N-acetyl-alpha-D-glucosamine = di-trans,octa-cis-undecaprenyl diphospho-[N-acetyl-alpha-D-glucosaminyl-(1-&gt;4)]-N-acetyl-alpha-D-muramoyl-L-alanyl-D-glutamyl-meso-2,6-diaminopimeloyl-D-alanyl-D-alanine + UDP + H(+). Its pathway is cell wall biogenesis; peptidoglycan biosynthesis. Its function is as follows. Cell wall formation. Catalyzes the transfer of a GlcNAc subunit on undecaprenyl-pyrophosphoryl-MurNAc-pentapeptide (lipid intermediate I) to form undecaprenyl-pyrophosphoryl-MurNAc-(pentapeptide)GlcNAc (lipid intermediate II). In Pseudothermotoga lettingae (strain ATCC BAA-301 / DSM 14385 / NBRC 107922 / TMO) (Thermotoga lettingae), this protein is UDP-N-acetylglucosamine--N-acetylmuramyl-(pentapeptide) pyrophosphoryl-undecaprenol N-acetylglucosamine transferase.